The primary structure comprises 365 residues: Probable caffeine synthase 2 (365 aa).

Tyrosine 19 contributes to the S-adenosyl-L-homocysteine binding site. Threonine 26 contacts caffeine. Positions 62, 99, 100, 134, and 135 each coordinate S-adenosyl-L-homocysteine. Positions 152, 155, and 156 each coordinate caffeine. Residue asparagine 173 participates in Mg(2+) binding. Arginine 221 lines the caffeine pocket. Mg(2+) is bound by residues aspartate 259, phenylalanine 261, and asparagine 262. Residue phenylalanine 317 coordinates caffeine.

It belongs to the methyltransferase superfamily. Type-7 methyltransferase family. It depends on Mg(2+) as a cofactor.

The catalysed reaction is 7-methylxanthine + S-adenosyl-L-methionine = theobromine + S-adenosyl-L-homocysteine + H(+). It carries out the reaction theobromine + S-adenosyl-L-methionine = caffeine + S-adenosyl-L-homocysteine + H(+). The enzyme catalyses 1,7-dimethylxanthine + S-adenosyl-L-methionine = caffeine + S-adenosyl-L-homocysteine + H(+). The protein operates within alkaloid biosynthesis. Its function is as follows. May be involved in the biosynthesis of caffeine. Catalyzes the conversion of 7-methylxanthine (7mX) to theobromine and of theobromine to caffeine. Has 1-N-methylation activity. The protein is Probable caffeine synthase 2 of Camellia sinensis (Tea plant).